Reading from the N-terminus, the 265-residue chain is Putative 2-aminoethylphosphonate transport system permease protein PhnV (265 aa).

Helical transmembrane passes span 13–33 (GVVA…VILM), 69–89 (LTIG…AALA), 104–124 (VFYL…LVAF), 131–151 (MNGT…AFTF), 185–205 (LPLL…LSMG), and 233–253 (NIAD…LLMM). One can recognise an ABC transmembrane type-1 domain in the interval 65–253 (LLASLTIGFC…LVAITLLLMM (189 aa)).

Belongs to the binding-protein-dependent transport system permease family.

The protein resides in the cell inner membrane. Probably part of the PhnSTUV complex (TC 3.A.1.11.5) involved in 2-aminoethylphosphonate import. Probably responsible for the translocation of the substrate across the membrane. The chain is Putative 2-aminoethylphosphonate transport system permease protein PhnV (phnV) from Salmonella paratyphi A (strain ATCC 9150 / SARB42).